The primary structure comprises 493 residues: Leucine-rich repeat-containing protein 14 (493 aa).

The LRR 1; degenerate repeat unit spans residues 111–146 (KHALRVLDMTGLLDDGVEQDPETMSMWDCTAAVART). The stretch at 194–218 (RLCCRDLRAEDLPMRNTVALLQLLD) is one LRR 2; degenerate repeat. Residues 219–246 (AGCLRRIDLRFNNLGLRGLSVIIPHVAR) form an LRR 3; degenerate repeat. The LRR 4; degenerate repeat unit spans residues 247–282 (FQHLASLRLHYVHGDSRQPSVDGEDNFRYFLAQMGR). LRR repeat units lie at residues 283–307 (FMCL…LSTL), 308–339 (QRPL…AHLK), 340–360 (KLDL…QGLL), 364–391 (ATTL…TLTR), and 392–416 (CASL…LLRD).

It belongs to the PRAME family. LRRC14 subfamily. As to quaternary structure, interacts with IKBKB; disrupts IKBKB-IKBKG interaction preventing I-kappa-B-kinase (IKK) core complex formation and leading to a decrease of IKBKB phosphorylation and NF-kappaB activation. Interacts with CHUK.

It localises to the cytoplasm. In terms of biological role, negatively regulates Toll-like receptor-mediated NF-kappa-B signaling by disrupting IKK core complex formation through interaction with IKBKB. This chain is Leucine-rich repeat-containing protein 14, found in Mus musculus (Mouse).